Consider the following 376-residue polypeptide: Zinc-regulated transporter 1 (376 aa).

At 1-50 the chain is on the extracellular side; the sequence is MSNVTTPWWKQWDPSEVTLADKTPDDVWKTCVLQGVYFGGNEYNGNLGAR. The helical transmembrane segment at 51-71 threads the bilayer; sequence ISSVFVILFVSTFFTMFPLIS. The Cytoplasmic segment spans residues 72-80; sequence TKVKRLRIP. Residues 81–101 form a helical membrane-spanning segment; it reads LYVYLFAKYFGSGVIVATAFI. Topologically, residues 102–122 are extracellular; the sequence is HLMDPAYGAIGGTTCVGQTGN. Residues 123–143 traverse the membrane as a helical segment; sequence WGLYSWCPAIMLTSLTFTFLT. Residues 144-216 are Cytoplasmic-facing; it reads DLFSSVWVER…TSMDVVQSFQ (73 aa). The span at 177-191 shows a compositional bias: polar residues; that stretch reads VSSENDNENGTANGS. The segment at 177 to 196 is disordered; the sequence is VSSENDNENGTANGSHDTKN. The helical transmembrane segment at 217–237 threads the bilayer; sequence AQFYAFLILEFGVIFHSVMIG. At 238 to 242 the chain is on the extracellular side; the sequence is LNLGS. The helical transmembrane segment at 243–263 threads the bilayer; the sequence is VGDEFSSLYPVLVFHQSFEGL. Topologically, residues 264–278 are cytoplasmic; that stretch reads GIGARLSAIEFPRSK. Residues 279–299 traverse the membrane as a helical segment; it reads RWWPWALCVAYGLTTPICVAI. The Extracellular segment spans residues 300–310; the sequence is GLGVRTRYVSG. Residues 311 to 331 traverse the membrane as a helical segment; it reads SYTALVISGVLDAISAGILLY. Topologically, residues 332–354 are cytoplasmic; it reads TGLVELLARDFIFNPQRTKDLRE. The chain crosses the membrane as a helical span at residues 355–375; that stretch reads LSFNVICTLFGAGIMALIGKW. Alanine 376 is a topological domain (extracellular).

The protein belongs to the ZIP transporter (TC 2.A.5) family.

Its subcellular location is the membrane. Functionally, high-affinity zinc transport protein. The protein is Zinc-regulated transporter 1 (ZRT1) of Saccharomyces cerevisiae (strain ATCC 204508 / S288c) (Baker's yeast).